The following is a 1409-amino-acid chain: Receptor-type tyrosine-protein phosphatase (1409 aa).

The N-terminal stretch at 1–22 (MRINRWIWWATVILLYLRTGLA) is a signal peptide. At 23–712 (ADFFRSSEEN…LLDTESSSSG (690 aa)) the chain is on the extracellular side. Positions 32-53 (NDRKSSDDLDNFNSTKIEPDKP) are disordered. Residues 159–267 (PTKCDKRDLA…TASASDLDVT (109 aa)) form the Ig-like C2-type domain. Residues Cys189 and Cys255 are joined by a disulfide bond. Fibronectin type-III domains are found at residues 276–366 (APRQ…TKQK) and 372–502 (KEED…AQPD). The helical transmembrane segment at 713–733 (FGIFMKIILPFLLFLAFATGV) threads the bilayer. The Cytoplasmic segment spans residues 734-1409 (TMFFVNRKGH…LADYISKTYR (676 aa)). Tyrosine-protein phosphatase domains lie at 793 to 1072 (FAQE…LAEW) and 1135 to 1403 (LEEE…LADY). Active-site phosphocysteine intermediate residues include Cys1013 and Cys1344.

Belongs to the protein-tyrosine phosphatase family. Receptor class 2A subfamily. As to expression, expressed in muscles, hypodermis and a subset of neurons. Expressed in the AVA neurons, with high expression in the anterior half of the preanal ganglion where AVA neurons contact the PHB neurons.

Its subcellular location is the cell membrane. It localises to the synapse. It carries out the reaction O-phospho-L-tyrosyl-[protein] + H2O = L-tyrosyl-[protein] + phosphate. In terms of biological role, possesses an intrinsic protein tyrosine phosphatase (PTPase) activity. Regulates egl-15 activity which is required for hypodermis-mediated fluid homeostasis and protein degradation in muscle. During the formation of neuromuscular junctions at the larval stage, negatively regulates membrane protrusion from body wall muscles. Plays a role in nicotinic acetylcholine receptor (nAChR)-mediated sensitivity to nicotine. Regulates synaptic levels of nAchR subunit lev-1 in the nerve cord. Promotes the outgrowth of the quaternary dendritic branches of the PVD sensory neurons. In parallel to the sax-7/mnr-1 pathway, also controls the extension of the PVD primary branches. Acts in the netrin/DCC pathway to mediate the formation of synapses between the AVA interneurons and the PHB sensory neurons. Also required for the formation of synapses between the AVA interneurons and the VA10 motor neurons. The sequence is that of Receptor-type tyrosine-protein phosphatase from Caenorhabditis elegans.